Reading from the N-terminus, the 324-residue chain is Thiazole synthase (324 aa).

The active-site Schiff-base intermediate with DXP is the Lys167. 1-deoxy-D-xylulose 5-phosphate is bound by residues Gly228, 254–255 (AG), and 276–277 (NT).

It belongs to the ThiG family. As to quaternary structure, homotetramer. Forms heterodimers with either ThiH or ThiS.

Its subcellular location is the cytoplasm. It carries out the reaction [ThiS sulfur-carrier protein]-C-terminal-Gly-aminoethanethioate + 2-iminoacetate + 1-deoxy-D-xylulose 5-phosphate = [ThiS sulfur-carrier protein]-C-terminal Gly-Gly + 2-[(2R,5Z)-2-carboxy-4-methylthiazol-5(2H)-ylidene]ethyl phosphate + 2 H2O + H(+). It participates in cofactor biosynthesis; thiamine diphosphate biosynthesis. Catalyzes the rearrangement of 1-deoxy-D-xylulose 5-phosphate (DXP) to produce the thiazole phosphate moiety of thiamine. Sulfur is provided by the thiocarboxylate moiety of the carrier protein ThiS. In vitro, sulfur can be provided by H(2)S. In Paramagnetospirillum magneticum (strain ATCC 700264 / AMB-1) (Magnetospirillum magneticum), this protein is Thiazole synthase.